Reading from the N-terminus, the 224-residue chain is Ribonuclease 3 (224 aa).

The region spanning 5-127 (ANRLQRRLGY…IIGAIYLDSD (123 aa)) is the RNase III domain. E40 contacts Mg(2+). Residue D44 is part of the active site. Positions 113 and 116 each coordinate Mg(2+). E116 is a catalytic residue. The DRBM domain occupies 154-224 (DPKTRLQECL…AELALKQLES (71 aa)).

It belongs to the ribonuclease III family. As to quaternary structure, homodimer. The cofactor is Mg(2+).

The protein localises to the cytoplasm. It carries out the reaction Endonucleolytic cleavage to 5'-phosphomonoester.. Its function is as follows. Digests double-stranded RNA. Involved in the processing of primary rRNA transcript to yield the immediate precursors to the large and small rRNAs (23S and 16S). Processes some mRNAs, and tRNAs when they are encoded in the rRNA operon. Processes pre-crRNA and tracrRNA of type II CRISPR loci if present in the organism. In Photobacterium profundum (strain SS9), this protein is Ribonuclease 3.